Here is a 660-residue protein sequence, read N- to C-terminus: Bifunctional polymyxin resistance protein ArnA (660 aa).

A formyltransferase ArnAFT region spans residues 1-304 (MKTVVFAYHD…TLGLVQGSRL (304 aa)). Residue 86 to 88 (HLI) coordinates (6R)-10-formyltetrahydrofolate. Residue H104 is the Proton donor; for formyltransferase activity of the active site. (6R)-10-formyltetrahydrofolate-binding positions include R114 and 136–140 (VKRAD). A dehydrogenase ArnADH region spans residues 314 to 660 (RRTRVLILGV…RTVDLTDKPS (347 aa)). Residues D347 and 368–369 (DI) each bind NAD(+). Residues A393, Y398, and 432–433 (TS) contribute to the UDP-alpha-D-glucuronate site. E434 serves as the catalytic Proton acceptor; for decarboxylase activity. Residues R460, N492, 526–535 (KLIDGGKQKR), and Y613 contribute to the UDP-alpha-D-glucuronate site. Catalysis depends on R619, which acts as the Proton donor; for decarboxylase activity.

It in the N-terminal section; belongs to the Fmt family. UDP-L-Ara4N formyltransferase subfamily. In the C-terminal section; belongs to the NAD(P)-dependent epimerase/dehydratase family. UDP-glucuronic acid decarboxylase subfamily. In terms of assembly, homohexamer, formed by a dimer of trimers.

The enzyme catalyses UDP-alpha-D-glucuronate + NAD(+) = UDP-beta-L-threo-pentopyranos-4-ulose + CO2 + NADH. The catalysed reaction is UDP-4-amino-4-deoxy-beta-L-arabinose + (6R)-10-formyltetrahydrofolate = UDP-4-deoxy-4-formamido-beta-L-arabinose + (6S)-5,6,7,8-tetrahydrofolate + H(+). The protein operates within nucleotide-sugar biosynthesis; UDP-4-deoxy-4-formamido-beta-L-arabinose biosynthesis; UDP-4-deoxy-4-formamido-beta-L-arabinose from UDP-alpha-D-glucuronate: step 1/3. It participates in nucleotide-sugar biosynthesis; UDP-4-deoxy-4-formamido-beta-L-arabinose biosynthesis; UDP-4-deoxy-4-formamido-beta-L-arabinose from UDP-alpha-D-glucuronate: step 3/3. It functions in the pathway bacterial outer membrane biogenesis; lipopolysaccharide biosynthesis. In terms of biological role, bifunctional enzyme that catalyzes the oxidative decarboxylation of UDP-glucuronic acid (UDP-GlcUA) to UDP-4-keto-arabinose (UDP-Ara4O) and the addition of a formyl group to UDP-4-amino-4-deoxy-L-arabinose (UDP-L-Ara4N) to form UDP-L-4-formamido-arabinose (UDP-L-Ara4FN). The modified arabinose is attached to lipid A and is required for resistance to polymyxin and cationic antimicrobial peptides. In Escherichia coli O6:H1 (strain CFT073 / ATCC 700928 / UPEC), this protein is Bifunctional polymyxin resistance protein ArnA.